A 663-amino-acid chain; its full sequence is MIDRKDNNQFHLVSKYEPSGDQPEAIEALVDNIEGGEKAQILKGATGTGKTYTMSQVIQKVNKPTLVIAHNKTLAGQLYGEFKEFFPDNAVEYFVSYYDYYQPEAYVPSSDTYIEKDSSVNDEIDKLRHSATSALLERNDVIVVASVSCIYGLGSPKEYADSVVSLRPSQEISRDQLLNDLVDIQFERNDIDFQRGRFRVRGDVVEIFPASRDEHAFRVEFFGDEIDRIREIESLTGRVLGEVDHLAIFPATHFMTNDEHMEVAIAKIQKEMKEQVRLFEAEGKLIEAQRIRQRTEYDVEMLREMGYTSGVENYSRHMDGRSEGEPPYTLLDFFPEDFLIMIDESHMTMGQIKGMYNGDRSRKEMLVNYGFRLPSALDNRPLRREEFESHVHQIVYVSATPGDYEMEQTDTVIEQIIRPTGLLDPEVEVRPTMGQMDDLLGEINTRADKGERTFITTLTKKMAEDLTDYLKEMGVKVKYMHSDIKTLERTEIIRDLRLGVFDVLIGINLLREGIDVPEVSLVAILDADKEGFLRNERGLIQTIGRAARNSQGHVIMYADTVTQSMRRAIDETHRRRQIQMAYNEEHGIIPQTIKKDIRDLIAITKANDSEVAEEAVDYNAMTKSERQEAIKKLQKQMQEAAELLDFELAAQIRDMVLELKAMD.

The Helicase ATP-binding domain occupies 31 to 188 (DNIEGGEKAQ…NDLVDIQFER (158 aa)). 44 to 51 (GATGTGKT) contributes to the ATP binding site. The Beta-hairpin signature appears at 97-120 (YYDYYQPEAYVPSSDTYIEKDSSV). Residues 435–601 (QMDDLLGEIN…TIKKDIRDLI (167 aa)) enclose the Helicase C-terminal domain. Positions 627-662 (QEAIKKLQKQMQEAAELLDFELAAQIRDMVLELKAM) constitute a UVR domain.

It belongs to the UvrB family. As to quaternary structure, forms a heterotetramer with UvrA during the search for lesions. Interacts with UvrC in an incision complex.

It localises to the cytoplasm. Its function is as follows. The UvrABC repair system catalyzes the recognition and processing of DNA lesions. A damage recognition complex composed of 2 UvrA and 2 UvrB subunits scans DNA for abnormalities. Upon binding of the UvrA(2)B(2) complex to a putative damaged site, the DNA wraps around one UvrB monomer. DNA wrap is dependent on ATP binding by UvrB and probably causes local melting of the DNA helix, facilitating insertion of UvrB beta-hairpin between the DNA strands. Then UvrB probes one DNA strand for the presence of a lesion. If a lesion is found the UvrA subunits dissociate and the UvrB-DNA preincision complex is formed. This complex is subsequently bound by UvrC and the second UvrB is released. If no lesion is found, the DNA wraps around the other UvrB subunit that will check the other stand for damage. This chain is UvrABC system protein B, found in Streptococcus mutans serotype c (strain ATCC 700610 / UA159).